A 207-amino-acid polypeptide reads, in one-letter code: Acyl-homoserine-lactone synthase (207 aa).

It belongs to the autoinducer synthase family.

It carries out the reaction a fatty acyl-[ACP] + S-adenosyl-L-methionine = an N-acyl-L-homoserine lactone + S-methyl-5'-thioadenosine + holo-[ACP] + H(+). Functionally, required for the synthesis of N-butanoyl-L-homoserine lactone (BHL), an autoinducer molecule which binds to AsaR. The chain is Acyl-homoserine-lactone synthase (asaI) from Aeromonas salmonicida.